Here is a 288-residue protein sequence, read N- to C-terminus: Signal recognition particle receptor FtsY (288 aa).

Residues 93 to 100 (GINGTGKT), 175 to 179 (DTAGR), and 233 to 236 (TKLD) contribute to the GTP site.

This sequence belongs to the GTP-binding SRP family. FtsY subfamily. Part of the signal recognition particle protein translocation system, which is composed of SRP and FtsY.

The protein resides in the cell membrane. The protein localises to the cytoplasm. It catalyses the reaction GTP + H2O = GDP + phosphate + H(+). Involved in targeting and insertion of nascent membrane proteins into the cytoplasmic membrane. Acts as a receptor for the complex formed by the signal recognition particle (SRP) and the ribosome-nascent chain (RNC). The polypeptide is Signal recognition particle receptor FtsY (Thermoplasma acidophilum (strain ATCC 25905 / DSM 1728 / JCM 9062 / NBRC 15155 / AMRC-C165)).